Reading from the N-terminus, the 524-residue chain is Glutamyl-tRNA(Gln) amidotransferase subunit A, mitochondrial (524 aa).

Residues Lys76 and Ser171 each act as charge relay system in the active site. Ser195 acts as the Acyl-ester intermediate in catalysis.

The protein belongs to the amidase family. GatA subfamily. In terms of assembly, subunit of the heterotrimeric GatCAB amidotransferase (AdT) complex, composed of A (qrsl1), B (gatb) and C (gatc) subunits.

It localises to the mitochondrion. The enzyme catalyses L-glutamyl-tRNA(Gln) + L-glutamine + ATP + H2O = L-glutaminyl-tRNA(Gln) + L-glutamate + ADP + phosphate + H(+). Allows the formation of correctly charged Gln-tRNA(Gln) through the transamidation of misacylated Glu-tRNA(Gln) in the mitochondria. The reaction takes place in the presence of glutamine and ATP through an activated gamma-phospho-Glu-tRNA(Gln). This is Glutamyl-tRNA(Gln) amidotransferase subunit A, mitochondrial (qrsl1) from Xenopus tropicalis (Western clawed frog).